Reading from the N-terminus, the 255-residue chain is Leucyl/phenylalanyl-tRNA--protein transferase (255 aa).

Belongs to the L/F-transferase family.

The protein resides in the cytoplasm. It carries out the reaction N-terminal L-lysyl-[protein] + L-leucyl-tRNA(Leu) = N-terminal L-leucyl-L-lysyl-[protein] + tRNA(Leu) + H(+). It catalyses the reaction N-terminal L-arginyl-[protein] + L-leucyl-tRNA(Leu) = N-terminal L-leucyl-L-arginyl-[protein] + tRNA(Leu) + H(+). The catalysed reaction is L-phenylalanyl-tRNA(Phe) + an N-terminal L-alpha-aminoacyl-[protein] = an N-terminal L-phenylalanyl-L-alpha-aminoacyl-[protein] + tRNA(Phe). In terms of biological role, functions in the N-end rule pathway of protein degradation where it conjugates Leu, Phe and, less efficiently, Met from aminoacyl-tRNAs to the N-termini of proteins containing an N-terminal arginine or lysine. This chain is Leucyl/phenylalanyl-tRNA--protein transferase, found in Burkholderia pseudomallei (strain 1106a).